The primary structure comprises 641 residues: Protein TIC 62, chloroplastic (641 aa).

A chloroplast-targeting transit peptide spans 1 to 63 (MEGTCFLRGQ…LSLRASGPIR (63 aa)). Ala64 is modified (N-acetylalanine). 84 to 113 (VFVAGATGKVGSRTVRELLKLGFRVRAGVR) is a binding site for NADP(+). The interval 328–641 (SKRPYVPPPK…SPLPSPVTNH (314 aa)) is disordered. Residues 359–372 (APKEDEAPPKEKNV) are compositionally biased toward basic and acidic residues. 2 repeat units span residues 376 to 397 (PLSP…PNST) and 444 to 465 (PLSP…PTAS). The segment at 376–638 (PLSPYASYED…PPTSPLPSPV (263 aa)) is 4 X 22 AA approximate repeats. Positions 393–402 (IPNSTTSVSP) are enriched in low complexity. Residues 435–444 (KQVEEKKERP) show a composition bias toward basic and acidic residues. The segment covering 485 to 528 (SSTVAKTVTETAVATSVTETSVATSVPETAVATSVTETAAPATS) has biased composition (low complexity). Repeat unit 3 spans residues 532 to 553 (PLSPYAIYADLKPPTSPTPAST). Residues 599 to 612 (AIDTSLASGDNTAQ) show a composition bias toward polar residues. Copy 4 of the repeat occupies 617 to 638 (PLSPYTMYADMKPPTSPLPSPV). Over residues 630-641 (PTSPLPSPVTNH) the composition is skewed to pro residues.

In terms of assembly, part of the Tic complex. Interacts with TIC110 and TIC55. Interacts with LFNR1 and LFNR2. Component of high molecular weight thylakoid LFNRs-containing protein complexes containing LIR1, LFNR1, LFNR2, TIC62 and TROL proteins. Expressed in cotyledons and leaves, but not in roots.

Its subcellular location is the plastid. It localises to the chloroplast inner membrane. It is found in the chloroplast stroma. The protein localises to the chloroplast thylakoid. Its function is as follows. Involved in protein precursor import into chloroplasts. Part of the redox regulon consisting of TIC32, TIC 55 and TIC62. Acts as a membrane anchor of LFNR1 and LFNR2. Has a NADPH-dependent dehydrogenase activity, but only after preincubation with lipids. The polypeptide is Protein TIC 62, chloroplastic (Arabidopsis thaliana (Mouse-ear cress)).